Here is a 465-residue protein sequence, read N- to C-terminus: Glutamate--tRNA ligase 2 (465 aa).

Residues 8–18 carry the 'HIGH' region motif; that stretch reads PSPTGLMHLGN. Positions 249–253 match the 'KMSKS' region motif; that stretch reads PLSKR. Lys252 is a binding site for ATP.

The protein belongs to the class-I aminoacyl-tRNA synthetase family. Glutamate--tRNA ligase type 1 subfamily. In terms of assembly, monomer.

It localises to the cytoplasm. It catalyses the reaction tRNA(Glu) + L-glutamate + ATP = L-glutamyl-tRNA(Glu) + AMP + diphosphate. Functionally, catalyzes the attachment of glutamate to tRNA(Glu) in a two-step reaction: glutamate is first activated by ATP to form Glu-AMP and then transferred to the acceptor end of tRNA(Glu). In Coxiella burnetii (strain RSA 331 / Henzerling II), this protein is Glutamate--tRNA ligase 2.